Reading from the N-terminus, the 527-residue chain is L-aspartate oxidase (527 aa).

FAD is bound by residues T17–A20, K40, A48–G55, and D212. The Proton donor/acceptor role is filled by R281. Residues E364 and S380–L381 each bind FAD.

Belongs to the FAD-dependent oxidoreductase 2 family. NadB subfamily. It depends on FAD as a cofactor.

It localises to the cytoplasm. The enzyme catalyses L-aspartate + O2 = iminosuccinate + H2O2. It functions in the pathway cofactor biosynthesis; NAD(+) biosynthesis; iminoaspartate from L-aspartate (oxidase route): step 1/1. Catalyzes the oxidation of L-aspartate to iminoaspartate, the first step in the de novo biosynthesis of NAD(+). This chain is L-aspartate oxidase (nadB), found in Mycobacterium tuberculosis (strain CDC 1551 / Oshkosh).